A 63-amino-acid polypeptide reads, in one-letter code: Large ribosomal subunit protein uL29 (63 aa).

It belongs to the universal ribosomal protein uL29 family.

This is Large ribosomal subunit protein uL29 from Herminiimonas arsenicoxydans.